A 225-amino-acid polypeptide reads, in one-letter code: MKKNVQIKGTKDGISIFLSDKASILELQQELTQLLADQKQNPYSGEKLEVQVQIGNRLFSEEEEREISTIIHKNSQMKISAFYSNVMSKDEAKKWKENDQIFSMATIIRSGQVVQVPGDFLLIGDVNPGGQIRSNGNVFVLGNIKGIIHAGFEGNENAVVAGKFLYPSQVRIAGKVYGFDSEDYKEVTETDLFSAFVNDAGEIVIDGIHKIRKIRPEISNFQGGR.

The protein belongs to the MinC family. In terms of assembly, interacts with MinD and FtsZ.

In terms of biological role, cell division inhibitor that blocks the formation of polar Z ring septums. Rapidly oscillates between the poles of the cell to destabilize FtsZ filaments that have formed before they mature into polar Z rings. Prevents FtsZ polymerization. The protein is Probable septum site-determining protein MinC of Listeria monocytogenes serotype 4a (strain HCC23).